Reading from the N-terminus, the 358-residue chain is Protein RecA (358 aa).

An ATP-binding site is contributed by 67 to 74; it reads GPESSGKT.

It belongs to the RecA family.

Its subcellular location is the cytoplasm. Functionally, can catalyze the hydrolysis of ATP in the presence of single-stranded DNA, the ATP-dependent uptake of single-stranded DNA by duplex DNA, and the ATP-dependent hybridization of homologous single-stranded DNAs. It interacts with LexA causing its activation and leading to its autocatalytic cleavage. The sequence is that of Protein RecA from Xenorhabdus bovienii (Xenorhabdus nematophila subsp. bovienii).